Consider the following 129-residue polypeptide: Glycine cleavage system H protein (129 aa).

Residues 24–106 (LVRVGISAFA…HGEGWLLVVR (83 aa)) enclose the Lipoyl-binding domain. An N6-lipoyllysine modification is found at Lys65.

Belongs to the GcvH family. The glycine cleavage system is composed of four proteins: P, T, L and H. (R)-lipoate is required as a cofactor.

The glycine cleavage system catalyzes the degradation of glycine. The H protein shuttles the methylamine group of glycine from the P protein to the T protein. This Prochlorococcus marinus (strain MIT 9303) protein is Glycine cleavage system H protein.